The following is a 133-amino-acid chain: Large-conductance mechanosensitive channel (133 aa).

The next 2 membrane-spanning stretches (helical) occupy residues 19-39 (IDLA…TSLV) and 79-99 (IQSV…VKLI).

It belongs to the MscL family. As to quaternary structure, homopentamer.

The protein resides in the cell membrane. In terms of biological role, channel that opens in response to stretch forces in the membrane lipid bilayer. May participate in the regulation of osmotic pressure changes within the cell. The chain is Large-conductance mechanosensitive channel from Clostridium tetani (strain Massachusetts / E88).